A 342-amino-acid chain; its full sequence is DDB1- and CUL4-associated factor 7 (342 aa).

WD repeat units lie at residues 6 to 52 (KRKE…LVGL), 60 to 100 (ICRN…VWRV), 108 to 150 (ECLL…IWGL), 165 to 206 (HVKT…MFDL), 213 to 252 (TIIYEDPQHHPLLRLCWNKQDPNYLATMAMDGMEVVILDV), 257 to 296 (TPVARLNNHRACVNGIAWAPHSSCHICTAADDHQALIWDI), and 303 to 342 (IEDPILAYTAEGEINNVQWASTQPDWIAICYNNCLEILRV).

Belongs to the WD repeat DCAF7 family. As to quaternary structure, interacts with DYRK1A, DYRK1B and DIAPH1. Interacts with DDB1. Interacts with ZNF703. Interacts with human adenovirus 5 E1A protein.

The protein resides in the cytoplasm. Its subcellular location is the nucleus. It functions in the pathway protein modification; protein ubiquitination. Functionally, involved in craniofacial development. Acts upstream of the EDN1 pathway and is required for formation of the upper jaw equivalent, the palatoquadrate. The activity required for EDN1 pathway function differs between the first and second arches. Associates with DIAPH1 and controls GLI1 transcriptional activity. Could be involved in normal and disease skin development. May function as a substrate receptor for CUL4-DDB1 E3 ubiquitin-protein ligase complex. This chain is DDB1- and CUL4-associated factor 7 (DCAF7), found in Homo sapiens (Human).